We begin with the raw amino-acid sequence, 156 residues long: Small ribosomal subunit protein uS7 (156 aa).

This sequence belongs to the universal ribosomal protein uS7 family. Part of the 30S ribosomal subunit. Contacts proteins S9 and S11.

One of the primary rRNA binding proteins, it binds directly to 16S rRNA where it nucleates assembly of the head domain of the 30S subunit. Is located at the subunit interface close to the decoding center, probably blocks exit of the E-site tRNA. This chain is Small ribosomal subunit protein uS7, found in Rhizobium leguminosarum bv. trifolii (strain WSM2304).